The following is a 251-amino-acid chain: MRKNIVAGNWKMNKTLQEGLALAKELDAALKGRTINCDVIIGTPFIHLASIAAAIDTTRIGVAAENCADKESGAYTGEVSAAMVASTGARYVIIGHSERRAYYHETSPILMEKVKLALSNGLTPIFCVGEVLEEREAGKHFEVVARQVEEALFTLDQTDFAKLILAYEPVWAIGTGKTATADQAQEMHAHIRKSIAAKYGKEVANGCSILYGGSCNAANAKELFSRADVDGGLIGGASLSVDKFLPIIEAF.

9–11 contributes to the substrate binding site; sequence NWK. The active-site Electrophile is the His-96. The Proton acceptor role is filled by Glu-168. Substrate contacts are provided by residues Gly-174, Ser-214, and 235-236; that span reads GG.

It belongs to the triosephosphate isomerase family. As to quaternary structure, homodimer.

The protein resides in the cytoplasm. It catalyses the reaction D-glyceraldehyde 3-phosphate = dihydroxyacetone phosphate. It functions in the pathway carbohydrate biosynthesis; gluconeogenesis. The protein operates within carbohydrate degradation; glycolysis; D-glyceraldehyde 3-phosphate from glycerone phosphate: step 1/1. In terms of biological role, involved in the gluconeogenesis. Catalyzes stereospecifically the conversion of dihydroxyacetone phosphate (DHAP) to D-glyceraldehyde-3-phosphate (G3P). This Porphyromonas gingivalis (strain ATCC BAA-308 / W83) protein is Triosephosphate isomerase.